Reading from the N-terminus, the 244-residue chain is tRNA pseudouridine synthase A (244 aa).

D52 serves as the catalytic Nucleophile. A substrate-binding site is contributed by Y110.

The protein belongs to the tRNA pseudouridine synthase TruA family. As to quaternary structure, homodimer.

The catalysed reaction is uridine(38/39/40) in tRNA = pseudouridine(38/39/40) in tRNA. In terms of biological role, formation of pseudouridine at positions 38, 39 and 40 in the anticodon stem and loop of transfer RNAs. This Geotalea uraniireducens (strain Rf4) (Geobacter uraniireducens) protein is tRNA pseudouridine synthase A.